Here is a 255-residue protein sequence, read N- to C-terminus: 5'-nucleotidase SurE (255 aa).

A divalent metal cation contacts are provided by aspartate 8, aspartate 9, serine 39, and asparagine 91.

It belongs to the SurE nucleotidase family. A divalent metal cation serves as cofactor.

Its subcellular location is the cytoplasm. It catalyses the reaction a ribonucleoside 5'-phosphate + H2O = a ribonucleoside + phosphate. Functionally, nucleotidase that shows phosphatase activity on nucleoside 5'-monophosphates. This chain is 5'-nucleotidase SurE, found in Acinetobacter baumannii (strain SDF).